The primary structure comprises 433 residues: MKKYLLYMVQVHLNFRRAELESLADLYNLSIDFSQYDANSPFFIVELENDQQAKDWIKRSILTRGIYEYWGQGTTLDELHKDIQRQSNFEQDLQLKFKHSTFKFEFECYKGNSKAKRVEQIETFRYLGFEGKIDMKHPQEVFTVIEEYTPISENVGGKTPTRIYFGRQVQMSNRSAMEKYDLKKRPYKGTTSFEAELSLVSANIAQVKPGTIMYDPFAGTGSFLVAGGHFGSLVIGSDIDGRMIRGKGAQVNISANFKKYGESSQFLDVLTMDFTNNALRNNLVIDTILCDPPYGIRESIKVLGAKDPERFLGKEDMEIDGEKAYLRRDYIPTKKPYALDSLLDDLLQYSSERLPIGGRLAFWMPTANDANIETIVPMHENLELKYNCVQEFNKWSRRLLVYINRGSTFNGSSNHGIKRSKDNFRERYFNNFN.

The protein belongs to the class I-like SAM-binding methyltransferase superfamily. TRM11 methyltransferase family. As to quaternary structure, interacts with TRM112.

It localises to the cytoplasm. The catalysed reaction is guanosine(10) in tRNA + S-adenosyl-L-methionine = N(2)-methylguanosine(10) in tRNA + S-adenosyl-L-homocysteine + H(+). Catalytic subunit of an S-adenosyl-L-methionine-dependent tRNA methyltransferase complex that mediates the methylation of the guanosine nucleotide at position 10 (m2G10) in tRNAs. This Saccharomyces cerevisiae (strain ATCC 204508 / S288c) (Baker's yeast) protein is tRNA (guanine(10)-N(2))-methyltransferase (TRM11).